An 806-amino-acid chain; its full sequence is Phenylalanine--tRNA ligase beta subunit (806 aa).

A tRNA-binding domain is found at 39–154; that stretch reads SAGLKKIVVG…EAIAPGTDVY (116 aa). The region spanning 410-485 is the B5 domain; the sequence is PQPKVIQFDS…RLYGYDNLPS (76 aa). Mg(2+) is bound by residues Asp463, Asp469, Glu472, and Glu473. One can recognise an FDX-ACB domain in the interval 713-806; it reads PKFPEVTRDI…LVATFQAKVR (94 aa).

The protein belongs to the phenylalanyl-tRNA synthetase beta subunit family. Type 1 subfamily. Tetramer of two alpha and two beta subunits. Mg(2+) serves as cofactor.

Its subcellular location is the cytoplasm. It carries out the reaction tRNA(Phe) + L-phenylalanine + ATP = L-phenylalanyl-tRNA(Phe) + AMP + diphosphate + H(+). This Latilactobacillus sakei subsp. sakei (strain 23K) (Lactobacillus sakei subsp. sakei) protein is Phenylalanine--tRNA ligase beta subunit.